Reading from the N-terminus, the 819-residue chain is MNISYKWLLEYLPCTLSPQEIADTLTSIGLETGGVEEIETIRGGLRGLVIGHVLTCEEHPNSDHLHITTVDVGADAPLQIVCGAPNVAAGQKVVVATVGTTLYHGEEEFAIKKSKIRGVESFGMICSEVEIGVGSSNDGTIVLPSDAPVGMPAAEYYHVESDYCIEVDITPNRVDATSHYGVARDLAASLKRNGVPAELKLPEVNLPTDIIDSRIEVKVADATACPRYQGLVIRDITVGESPEWLRNRLQAIGLRPINNIVDITNYVLHEFGQPLHAFDLAFIKGDRVHVQTVAEGTPFVTLDGVERKLTAEDLMICDSNGDPMCVAGVFGGLHSGVTEKTTDIFLESANFNPTMVRRTARRLGLNTDSSFRFERGLDPERTDWALRRAASLILEIAGGHLGGMTDVYSNPLKPHLISLSFEKVNSVIGRTIEPEMVRSILNSLEIRISKEEDGVMTLEVPRYRTDVTRDVDVIEEIMRIYGYNQVELTGYIRASLGHETETDRRYKWQTVVSEQLVGAGFNEILNNSLTAGSYYEGLKSHPREMAVELMNPLSQELNCMRQTLLFGGLETLSHNLRRKHLSLYLFEWGKCYRFHAAKRTDETPLAAYAEDDRLGIWICGQRVHNSWAHPEEPTSVFELKAVVEQVLCRVGIETGAYTLKTADNDLYASAMEVKTRSGKLLGTFGTVSTELIKRFEIEQPVYFAELLWDALMSESARYKLEARDLPRFPEVKRDLALLLDKAVSFAEIESLARGCEKKLLRRVELFDVYEGKNLPAGKKSYAVSFFLRNDEKTLNDKQIEAIMAKIRTTLEQKLGAQLR.

Residues 42 to 154 enclose the tRNA-binding domain; sequence RGGLRGLVIG…SDAPVGMPAA (113 aa). A B5 domain is found at 412-488; it reads LKPHLISLSF…RIYGYNQVEL (77 aa). Residues Asp-466, Asp-472, Glu-475, and Glu-476 each coordinate Mg(2+). Residues 726–819 enclose the FDX-ACB domain; that stretch reads PRFPEVKRDL…LEQKLGAQLR (94 aa).

The protein belongs to the phenylalanyl-tRNA synthetase beta subunit family. Type 1 subfamily. As to quaternary structure, tetramer of two alpha and two beta subunits. Requires Mg(2+) as cofactor.

It localises to the cytoplasm. The enzyme catalyses tRNA(Phe) + L-phenylalanine + ATP = L-phenylalanyl-tRNA(Phe) + AMP + diphosphate + H(+). This chain is Phenylalanine--tRNA ligase beta subunit, found in Porphyromonas gingivalis (strain ATCC BAA-308 / W83).